Here is a 431-residue protein sequence, read N- to C-terminus: Enolase (431 aa).

Glutamine 163 lines the (2R)-2-phosphoglycerate pocket. Glutamate 205 acts as the Proton donor in catalysis. Mg(2+) is bound by residues aspartate 242, glutamate 288, and aspartate 315. (2R)-2-phosphoglycerate contacts are provided by lysine 340, arginine 369, serine 370, and lysine 391. Lysine 340 acts as the Proton acceptor in catalysis.

It belongs to the enolase family. Requires Mg(2+) as cofactor.

The protein localises to the cytoplasm. It is found in the secreted. Its subcellular location is the cell surface. It catalyses the reaction (2R)-2-phosphoglycerate = phosphoenolpyruvate + H2O. Its pathway is carbohydrate degradation; glycolysis; pyruvate from D-glyceraldehyde 3-phosphate: step 4/5. Its function is as follows. Catalyzes the reversible conversion of 2-phosphoglycerate (2-PG) into phosphoenolpyruvate (PEP). It is essential for the degradation of carbohydrates via glycolysis. This Trichlorobacter lovleyi (strain ATCC BAA-1151 / DSM 17278 / SZ) (Geobacter lovleyi) protein is Enolase.